We begin with the raw amino-acid sequence, 44 residues long: Metallothionein-4 (44 aa).

This sequence belongs to the metallothionein superfamily. Type 5 family.

This protein binds cations of several transition elements. Thought to be involved in metal ion homeostasis. This is Metallothionein-4 (MtnD) from Drosophila melanogaster (Fruit fly).